Here is a 206-residue protein sequence, read N- to C-terminus: LexA repressor (206 aa).

Residues 27–47 (YEEIRQNLGFRSLNAVFKHLK) constitute a DNA-binding region (H-T-H motif). Active-site for autocatalytic cleavage activity residues include S120 and K157.

This sequence belongs to the peptidase S24 family. In terms of assembly, homodimer.

The enzyme catalyses Hydrolysis of Ala-|-Gly bond in repressor LexA.. Its function is as follows. Represses a number of genes involved in the response to DNA damage (SOS response), including recA and lexA. In the presence of single-stranded DNA, RecA interacts with LexA causing an autocatalytic cleavage which disrupts the DNA-binding part of LexA, leading to derepression of the SOS regulon and eventually DNA repair. This Syntrophobacter fumaroxidans (strain DSM 10017 / MPOB) protein is LexA repressor.